The chain runs to 438 residues: Histidinol dehydrogenase (438 aa).

The NAD(+) site is built by tyrosine 129, glutamine 193, and asparagine 216. Substrate contacts are provided by threonine 239, glutamine 261, and histidine 264. The Zn(2+) site is built by glutamine 261 and histidine 264. Catalysis depends on proton acceptor residues glutamate 330 and histidine 331. Histidine 331, aspartate 364, glutamate 418, and histidine 423 together coordinate substrate. Aspartate 364 is a binding site for Zn(2+). Histidine 423 serves as a coordination point for Zn(2+).

It belongs to the histidinol dehydrogenase family. Zn(2+) serves as cofactor.

The catalysed reaction is L-histidinol + 2 NAD(+) + H2O = L-histidine + 2 NADH + 3 H(+). It functions in the pathway amino-acid biosynthesis; L-histidine biosynthesis; L-histidine from 5-phospho-alpha-D-ribose 1-diphosphate: step 9/9. Catalyzes the sequential NAD-dependent oxidations of L-histidinol to L-histidinaldehyde and then to L-histidine. This chain is Histidinol dehydrogenase, found in Thermobifida fusca (strain YX).